Here is a 432-residue protein sequence, read N- to C-terminus: Adenylosuccinate synthetase (432 aa).

GTP is bound by residues 13 to 19 and 41 to 43; these read GDEGKGK and GHT. Residue aspartate 14 is the Proton acceptor of the active site. Residues aspartate 14 and glycine 41 each contribute to the Mg(2+) site. IMP contacts are provided by residues 14–17, 39–42, threonine 130, arginine 144, glutamine 225, threonine 240, and arginine 304; these read DEGK and NAGH. Histidine 42 serves as the catalytic Proton donor. Substrate is bound at residue 300 to 306; it reads AVTGRPR. GTP is bound by residues arginine 306, 332–334, and 415–417; these read KLD and STG.

Belongs to the adenylosuccinate synthetase family. In terms of assembly, homodimer. Requires Mg(2+) as cofactor.

The protein localises to the cytoplasm. The catalysed reaction is IMP + L-aspartate + GTP = N(6)-(1,2-dicarboxyethyl)-AMP + GDP + phosphate + 2 H(+). Its pathway is purine metabolism; AMP biosynthesis via de novo pathway; AMP from IMP: step 1/2. Plays an important role in the de novo pathway of purine nucleotide biosynthesis. Catalyzes the first committed step in the biosynthesis of AMP from IMP. The polypeptide is Adenylosuccinate synthetase (Actinobacillus pleuropneumoniae serotype 5b (strain L20)).